A 104-amino-acid chain; its full sequence is uncharacterized protein (104 aa).

The protein belongs to the mimivirus L28/L54 family.

This is an uncharacterized protein from Acanthamoeba polyphaga mimivirus (APMV).